Here is a 148-residue protein sequence, read N- to C-terminus: Putative HTH-type transcriptional regulator NMA1593 (148 aa).

The HTH rrf2-type domain occupies 2–131 (RLTTKGRFAV…GSVTLQSIIE (130 aa)).

In Neisseria meningitidis serogroup A / serotype 4A (strain DSM 15465 / Z2491), this protein is Putative HTH-type transcriptional regulator NMA1593.